Reading from the N-terminus, the 301-residue chain is 33 kDa chaperonin (301 aa).

2 disulfides stabilise this stretch: Cys-244–Cys-246 and Cys-277–Cys-280.

Belongs to the HSP33 family. Under oxidizing conditions two disulfide bonds are formed involving the reactive cysteines. Under reducing conditions zinc is bound to the reactive cysteines and the protein is inactive.

It localises to the cytoplasm. In terms of biological role, redox regulated molecular chaperone. Protects both thermally unfolding and oxidatively damaged proteins from irreversible aggregation. Plays an important role in the bacterial defense system toward oxidative stress. In Geobacter sulfurreducens (strain ATCC 51573 / DSM 12127 / PCA), this protein is 33 kDa chaperonin.